The sequence spans 905 residues: Methionine--tRNA ligase, cytoplasmic (905 aa).

The 75-residue stretch at 1-75 (MKLFVGEGNP…YFYLSSGHDM (75 aa)) folds into the GST N-terminal domain. The GST C-terminal domain maps to 72–199 (GHDMCDLSNQ…DKGSSVFKPF (128 aa)). A 'HIGH' region motif is present at residues 271–281 (PYVNNVPHLGN). Residues 591–595 (KFSKS) carry the 'KMSKS' region motif. K594 is an ATP binding site. 2 disordered regions span residues 813 to 874 (RFGG…VIDP) and 886 to 905 (LALAEGKSPDPPTQKGKKKK). Positions 841–874 (GPERVKELMQELEKQGNHVRELKGKKAEKSVIDP) are enriched in basic and acidic residues. One can recognise a WHEP-TRS domain in the interval 844 to 900 (RVKELMQELEKQGNHVRELKGKKAEKSVIDPEVQKLLALKKELALAEGKSPDPPTQK).

It belongs to the class-I aminoacyl-tRNA synthetase family. As to quaternary structure, monomer. Part of a multisubunit complex that groups tRNA ligases for Arg (RARS1), Asp (DARS1), Gln (QARS1), Ile (IARS1), Leu (LARS1), Lys (KARS1), Met (MARS1) the bifunctional ligase for Glu and Pro (EPRS1) and the auxiliary subunits AIMP1/p43, AIMP2/p38 and EEF1E1/p18.

The protein localises to the cytoplasm. The protein resides in the cytosol. Its subcellular location is the nucleus. It is found in the nucleolus. It catalyses the reaction tRNA(Met) + L-methionine + ATP = L-methionyl-tRNA(Met) + AMP + diphosphate. Functionally, catalyzes the specific attachment of an amino acid to its cognate tRNA in a 2 step reaction: the amino acid (AA) is first activated by ATP to form AA-AMP and then transferred to the acceptor end of the tRNA. Plays a role in the synthesis of ribosomal RNA in the nucleolus. The chain is Methionine--tRNA ligase, cytoplasmic (mars1) from Xenopus laevis (African clawed frog).